Here is a 228-residue protein sequence, read N- to C-terminus: Ribose-5-phosphate isomerase A (228 aa).

Substrate contacts are provided by residues 31–34, 85–88, and 97–100; these read TGST, DGAD, and KGGG. Catalysis depends on E106, which acts as the Proton acceptor. K124 contacts substrate.

Belongs to the ribose 5-phosphate isomerase family. Homodimer.

The enzyme catalyses aldehydo-D-ribose 5-phosphate = D-ribulose 5-phosphate. Its pathway is carbohydrate degradation; pentose phosphate pathway; D-ribose 5-phosphate from D-ribulose 5-phosphate (non-oxidative stage): step 1/1. In terms of biological role, catalyzes the reversible conversion of ribose-5-phosphate to ribulose 5-phosphate. The polypeptide is Ribose-5-phosphate isomerase A (Haloarcula marismortui (strain ATCC 43049 / DSM 3752 / JCM 8966 / VKM B-1809) (Halobacterium marismortui)).